A 384-amino-acid chain; its full sequence is Sensor protein VanS (384 aa).

The next 2 membrane-spanning stretches (helical) occupy residues 21 to 41 (MYIV…RSMI) and 76 to 96 (IDIF…RVML). Positions 161-376 (YLAHDIKTPL…TFRVELPAMP (216 aa)) constitute a Histidine kinase domain. His164 bears the Phosphohistidine; by autocatalysis mark. The segment at 221–384 (QTITLTKTHI…MPDLVDKRRS (164 aa)) is involved in low-affinity ATP-binding. Exhibits higher affinity for ATP than GTP.

Post-translationally, autophosphorylated.

The protein resides in the membrane. The enzyme catalyses ATP + protein L-histidine = ADP + protein N-phospho-L-histidine.. With respect to regulation, phosphorylation of VanR inhibited by EDTA. Member of the two-component regulatory system VanS/VanR. Functions as a sensor protein kinase which is autophosphorylated at a histidine residue in response to environmental stimuli, such as glycopeptide antibiotics. VanS transfers its phosphate group to transcriptional regulatory protein VanR, thereby modulating expression of target genes. Binds directly to, and autophosphorylation activity is enhanced by, the glycopeptides vancomycin and teicoplanin, in vitro. However it has also been reported that autophosphorylation, phosphate transfer to VanR and dephosphorylation of phospho-VanR are all unaffected by the presence of vancomycin, in vitro. In the absence of vancomycin, negatively regulates VanR-mediated activation of vanS, vanH, vanA and vanX, probably as a result of dephosphorylating phospho-VanR. May inhibit promoter-specific DNA binding by VanR. Involved in conferring vancomycin resistance. The protein is Sensor protein VanS of Enterococcus faecium (Streptococcus faecium).